The following is a 229-amino-acid chain: Glutathione S-transferase 1 (229 aa).

Residues 2 to 83 (SPVKVFGHPM…YILRKYGGTA (82 aa)) form the GST N-terminal domain. Residues 41 to 42 (HK), 54 to 55 (KM), and 67 to 68 (ES) contribute to the glutathione site. The GST C-terminal domain maps to 93–223 (GIEELAMVDV…RVCKHMPTEF (131 aa)).

It belongs to the GST superfamily. Phi family.

It carries out the reaction RX + glutathione = an S-substituted glutathione + a halide anion + H(+). Its function is as follows. Conjugation of reduced glutathione to a wide number of exogenous and endogenous hydrophobic electrophiles. In Triticum aestivum (Wheat), this protein is Glutathione S-transferase 1 (GSTA1).